A 193-amino-acid polypeptide reads, in one-letter code: Large ribosomal subunit protein uL18 (193 aa).

It belongs to the universal ribosomal protein uL18 family. In terms of assembly, part of the 50S ribosomal subunit. Contacts the 5S and 23S rRNAs.

This is one of the proteins that bind and probably mediate the attachment of the 5S RNA into the large ribosomal subunit, where it forms part of the central protuberance. This chain is Large ribosomal subunit protein uL18, found in Methanococcus maripaludis (strain C6 / ATCC BAA-1332).